A 1338-amino-acid polypeptide reads, in one-letter code: P-type sodium-transporting ATPase4 (1338 aa).

Residues 1–106 (MAARASADKL…KSISSVSQMH (106 aa)) form a disordered region. Positions 55–69 (AEEKVAGHDGESPRR) are enriched in basic and acidic residues. The segment covering 91-104 (GHSQLGKSISSVSQ) has biased composition (polar residues). Transmembrane regions (helical) follow at residues 229-249 (IFIQ…AIAS), 255-275 (WVEG…ATYM), 418-438 (LGGM…VVAI), 456-476 (IVLV…PMVV), 985-1005 (FVCF…IAIA), 1068-1088 (IFEA…CTGV), 1261-1281 (MHLA…VPGI), and 1288-1308 (CALP…NLIL).

This sequence belongs to the cation transport ATPase (P-type) (TC 3.A.3) family.

Its subcellular location is the cell membrane. It carries out the reaction Na(+)(in) + ATP + H2O = Na(+)(out) + ADP + phosphate + H(+). Inhibited by cipargamin, a synthetic spiroindolone. Inhibited by pyrazoleamide PA21A050, structurally unrelated to the spiroindolones. Inhibited by (+)-SJ733, a dihydroisoquinolone compound. In terms of biological role, sodium-exporting ATPase. Required for the extrusion of Na(+) from the parasites to maintain a low cytosolic concentration of Na(+). Required for maintaining the viability of extracellular parasites but not for intracellular growth, egress or invasion. Involved in parasite virulence. This is P-type sodium-transporting ATPase4 from Toxoplasma gondii (strain ATCC 50861 / VEG).